The chain runs to 668 residues: tRNA 5-methylaminomethyl-2-thiouridine biosynthesis bifunctional protein MnmC (668 aa).

A tRNA (mnm(5)s(2)U34)-methyltransferase region spans residues 1-245 (MKHYSIQPAN…KREMLCGVME (245 aa)). The segment at 270–668 (IGGGIACALL…LLKGKAVKAG (399 aa)) is FAD-dependent cmnm(5)s(2)U34 oxidoreductase.

The protein in the N-terminal section; belongs to the methyltransferase superfamily. tRNA (mnm(5)s(2)U34)-methyltransferase family. In the C-terminal section; belongs to the DAO family. It depends on FAD as a cofactor.

It localises to the cytoplasm. The catalysed reaction is 5-aminomethyl-2-thiouridine(34) in tRNA + S-adenosyl-L-methionine = 5-methylaminomethyl-2-thiouridine(34) in tRNA + S-adenosyl-L-homocysteine + H(+). Functionally, catalyzes the last two steps in the biosynthesis of 5-methylaminomethyl-2-thiouridine (mnm(5)s(2)U) at the wobble position (U34) in tRNA. Catalyzes the FAD-dependent demodification of cmnm(5)s(2)U34 to nm(5)s(2)U34, followed by the transfer of a methyl group from S-adenosyl-L-methionine to nm(5)s(2)U34, to form mnm(5)s(2)U34. The polypeptide is tRNA 5-methylaminomethyl-2-thiouridine biosynthesis bifunctional protein MnmC (Shigella boydii serotype 4 (strain Sb227)).